A 720-amino-acid polypeptide reads, in one-letter code: Fatty acid oxidation complex subunit alpha (720 aa).

The enoyl-CoA hydratase/isomerase stretch occupies residues 1–189 (MIYQGETLSV…KLGLVDAVVA (189 aa)). Substrate is bound at residue Asp296. A 3-hydroxyacyl-CoA dehydrogenase region spans residues 311-720 (QPTKKGVVLG…ESYYTQQVNA (410 aa)). NAD(+)-binding positions include Met324, Asp343, 400-402 (VVE), Lys407, and Ser429. The active-site For 3-hydroxyacyl-CoA dehydrogenase activity is the His450. Asn453 lines the NAD(+) pocket. 2 residues coordinate substrate: Asn500 and Tyr660.

The protein in the N-terminal section; belongs to the enoyl-CoA hydratase/isomerase family. In the C-terminal section; belongs to the 3-hydroxyacyl-CoA dehydrogenase family. As to quaternary structure, heterotetramer of two alpha chains (FadB) and two beta chains (FadA).

The catalysed reaction is a (3S)-3-hydroxyacyl-CoA + NAD(+) = a 3-oxoacyl-CoA + NADH + H(+). It catalyses the reaction a (3S)-3-hydroxyacyl-CoA = a (2E)-enoyl-CoA + H2O. The enzyme catalyses a 4-saturated-(3S)-3-hydroxyacyl-CoA = a (3E)-enoyl-CoA + H2O. It carries out the reaction (3S)-3-hydroxybutanoyl-CoA = (3R)-3-hydroxybutanoyl-CoA. The catalysed reaction is a (3Z)-enoyl-CoA = a 4-saturated (2E)-enoyl-CoA. It catalyses the reaction a (3E)-enoyl-CoA = a 4-saturated (2E)-enoyl-CoA. The protein operates within lipid metabolism; fatty acid beta-oxidation. Involved in the aerobic and anaerobic degradation of long-chain fatty acids via beta-oxidation cycle. Catalyzes the formation of 3-oxoacyl-CoA from enoyl-CoA via L-3-hydroxyacyl-CoA. It can also use D-3-hydroxyacyl-CoA and cis-3-enoyl-CoA as substrate. The polypeptide is Fatty acid oxidation complex subunit alpha (Photobacterium profundum (strain SS9)).